A 761-amino-acid chain; its full sequence is RNA-binding protein 12B (761 aa).

Phosphoserine is present on residues serine 98, serine 101, and serine 112. Residue lysine 114 forms a Glycyl lysine isopeptide (Lys-Gly) (interchain with G-Cter in SUMO2) linkage. The tract at residues 120-147 is disordered; sequence SGYGSSINQDAGFHSNGTGHGNLRPRKT. Residue lysine 151 forms a Glycyl lysine isopeptide (Lys-Gly) (interchain with G-Cter in SUMO2) linkage. Positions 155–230 constitute an RRM 1 domain; that stretch reads PYLFLRGLPY…RFIEVMQGSE (76 aa). Residues 247 to 262 are compositionally biased toward basic and acidic residues; it reads LRRSEEHSPPRGINDR. The interval 247 to 278 is disordered; the sequence is LRRSEEHSPPRGINDRHFRKRSHSKSPRRTRS. Residues serine 250 and serine 254 each carry the phosphoserine modification. Residues 263–278 are compositionally biased toward basic residues; that stretch reads HFRKRSHSKSPRRTRS. Threonine 276 carries the phosphothreonine modification. A phosphoserine mark is found at serine 278, serine 280, serine 292, and serine 294. An RRM 2 domain is found at 284–360; that stretch reads FYVHLKNLSL…RPVHIDPISR (77 aa). Lysine 319 carries the post-translational modification N6-acetyllysine. Lysine 335 is covalently cross-linked (Glycyl lysine isopeptide (Lys-Gly) (interchain with G-Cter in SUMO2)). The span at 372 to 384 shows a compositional bias: basic and acidic residues; sequence KKRSGSPERDRPG. The interval 372–392 is disordered; that stretch reads KKRSGSPERDRPGHVSQKYSQ. Serine 377 carries the post-translational modification Phosphoserine. The 78-residue stretch at 400–477 folds into the RRM 3 domain; sequence LCIYIRNFPF…TEVLLRLISE (78 aa). Glycyl lysine isopeptide (Lys-Gly) (interchain with G-Cter in SUMO2) cross-links involve residues lysine 514 and lysine 541. Over residues 538-621 the composition is skewed to basic and acidic residues; that stretch reads DNFKHPQRDF…RHPREEDWRR (84 aa). The segment at 538-690 is disordered; it reads DNFKHPQRDF…THQMKTSGAL (153 aa). Phosphoserine occurs at positions 575 and 591. Residues 627–654 show a composition bias toward polar residues; sequence LQSTSGGHPQSISGGHPQSISGARPRST. A compositionally biased stretch (low complexity) spans 661-672; sequence SISGGRLRSISG.

The protein is RNA-binding protein 12B (RBM12B) of Pongo abelii (Sumatran orangutan).